A 248-amino-acid chain; its full sequence is PACRG-like protein (248 aa).

Residue Met1 is modified to N-acetylmethionine. Positions 1–72 (MQRSECSGGV…NPKTINPFGE (72 aa)) are disordered. Composition is skewed to polar residues over residues 14 to 29 (NRAT…SSTQ) and 36 to 45 (VQRSKSSSLT). Residue Ser47 is modified to Phosphoserine.

The protein is PACRG-like protein (Pacrgl) of Mus musculus (Mouse).